Reading from the N-terminus, the 146-residue chain is Hemoglobin subunit beta (146 aa).

Valine 1 carries the post-translational modification N-acetylvaline. Positions 2–146 (HLTGEEKTAV…VANALAHKYH (145 aa)) constitute a Globin domain. Threonine 12 carries the post-translational modification Phosphothreonine. Serine 44 is modified (phosphoserine). Lysine 59 carries the N6-acetyllysine modification. Histidine 63 is a heme b binding site. N6-acetyllysine is present on lysine 82. Histidine 92 provides a ligand contact to heme b. The residue at position 93 (cysteine 93) is an S-nitrosocysteine. An N6-acetyllysine modification is found at lysine 144.

This sequence belongs to the globin family. Heterotetramer of two alpha chains and two beta chains. Red blood cells.

Its function is as follows. Involved in oxygen transport from the lung to the various peripheral tissues. This Nasua nasua (Ring-tailed coati) protein is Hemoglobin subunit beta (HBB).